The chain runs to 28 residues: leu operon leader peptide (28 aa).

In terms of biological role, involved in control of the biosynthesis of leucine. The sequence is that of leu operon leader peptide (leuL) from Salmonella typhi.